Here is a 193-residue protein sequence, read N- to C-terminus: Ribosome hibernation promotion factor (193 aa).

Belongs to the HPF/YfiA ribosome-associated protein family. Long HPF subfamily. In terms of assembly, interacts with 100S ribosomes.

The protein localises to the cytoplasm. In terms of biological role, might modulate either transcription and/or translation. Functionally, required for dimerization of active 70S ribosomes into 100S ribosomes in stationary phase; 100S ribosomes are translationally inactive and sometimes present during exponential growth. The polypeptide is Ribosome hibernation promotion factor (Picosynechococcus sp. (strain ATCC 27264 / PCC 7002 / PR-6) (Agmenellum quadruplicatum)).